The following is a 454-amino-acid chain: MTTSNRRYHITTFGCQMNKADSERMAGILEDMGFKFSEDPNNADLILYNTCTIRDNAEQKVYSYLGRQAKRKHEQPDLTLVVAGCVAQQEGEALLRRVPELDLVMGPQHANRLKDLLESVFAGNQVVATEAVHIMEDITQARRDSTVTAWVNVIYGCNERCTYCVVPNVRGVEQSRTPAAVRAEMEELGRQGYKEITLLGQNIDAYGRDLPGATPEGRHLHTFTDLLYYVHDVPGVERIRFATSHPRYFTERLIKACAELPKVCEHFHIPFQSGDNQLLKAMARGYTQEKYRRIIDTIRRYMPDASISADAIVGFPGETEEQFENTLKLVDDIGFDQLNTAAYSPRPGTPAALWENQLSEEVKSDRLQRLNHLVNVKAAERSQRYMGRIEEVLVEEQNPKDQTQVMGRTGGNRLTFFKGDIHELKGQLVMVKINEVRAFSLTGEPIEMRQALPI.

In terms of domain architecture, MTTase N-terminal spans 6–122; sequence RRYHITTFGC…LKDLLESVFA (117 aa). The [4Fe-4S] cluster site is built by Cys15, Cys51, Cys85, Cys157, Cys161, and Cys164. The 238-residue stretch at 143 to 380 folds into the Radical SAM core domain; the sequence is RDSTVTAWVN…NHLVNVKAAE (238 aa). In terms of domain architecture, TRAM spans 383 to 447; sequence QRYMGRIEEV…AFSLTGEPIE (65 aa).

It belongs to the methylthiotransferase family. MiaB subfamily. As to quaternary structure, monomer. Requires [4Fe-4S] cluster as cofactor.

It localises to the cytoplasm. It catalyses the reaction N(6)-dimethylallyladenosine(37) in tRNA + (sulfur carrier)-SH + AH2 + 2 S-adenosyl-L-methionine = 2-methylsulfanyl-N(6)-dimethylallyladenosine(37) in tRNA + (sulfur carrier)-H + 5'-deoxyadenosine + L-methionine + A + S-adenosyl-L-homocysteine + 2 H(+). In terms of biological role, catalyzes the methylthiolation of N6-(dimethylallyl)adenosine (i(6)A), leading to the formation of 2-methylthio-N6-(dimethylallyl)adenosine (ms(2)i(6)A) at position 37 in tRNAs that read codons beginning with uridine. In Nostoc sp. (strain PCC 7120 / SAG 25.82 / UTEX 2576), this protein is tRNA-2-methylthio-N(6)-dimethylallyladenosine synthase.